Here is a 355-residue protein sequence, read N- to C-terminus: Isopentenyl-diphosphate delta-isomerase (355 aa).

Residue 9-10 participates in substrate binding; it reads RK. Residues 67 to 69, S97, and N125 contribute to the FMN site; that span reads AIT. 97–99 contacts substrate; sequence SQR. Q161 contributes to the substrate binding site. Residue E162 coordinates Mg(2+). FMN-binding positions include K197, T227, 276–278, and 297–298; these read GIR and AL.

It belongs to the IPP isomerase type 2 family. Homooctamer. Dimer of tetramers. FMN serves as cofactor. Requires NADPH as cofactor. It depends on Mg(2+) as a cofactor.

The protein resides in the cytoplasm. It carries out the reaction isopentenyl diphosphate = dimethylallyl diphosphate. Functionally, involved in the biosynthesis of isoprenoids. Catalyzes the 1,3-allylic rearrangement of the homoallylic substrate isopentenyl (IPP) to its allylic isomer, dimethylallyl diphosphate (DMAPP). The chain is Isopentenyl-diphosphate delta-isomerase from Methanococcus maripaludis (strain DSM 14266 / JCM 13030 / NBRC 101832 / S2 / LL).